The primary structure comprises 360 residues: Phospho-N-acetylmuramoyl-pentapeptide-transferase (360 aa).

The next 10 membrane-spanning stretches (helical) occupy residues arginine 25–isoleucine 45, threonine 73–leucine 93, tyrosine 97–tyrosine 117, tyrosine 134–threonine 154, leucine 168–serine 188, glycine 199–serine 219, alanine 236–phenylalanine 256, valine 263–isoleucine 283, valine 288–valine 308, and valine 338–lysine 358.

The protein belongs to the glycosyltransferase 4 family. MraY subfamily. Requires Mg(2+) as cofactor.

Its subcellular location is the cell inner membrane. The enzyme catalyses UDP-N-acetyl-alpha-D-muramoyl-L-alanyl-gamma-D-glutamyl-meso-2,6-diaminopimeloyl-D-alanyl-D-alanine + di-trans,octa-cis-undecaprenyl phosphate = di-trans,octa-cis-undecaprenyl diphospho-N-acetyl-alpha-D-muramoyl-L-alanyl-D-glutamyl-meso-2,6-diaminopimeloyl-D-alanyl-D-alanine + UMP. The protein operates within cell wall biogenesis; peptidoglycan biosynthesis. Its function is as follows. Catalyzes the initial step of the lipid cycle reactions in the biosynthesis of the cell wall peptidoglycan: transfers peptidoglycan precursor phospho-MurNAc-pentapeptide from UDP-MurNAc-pentapeptide onto the lipid carrier undecaprenyl phosphate, yielding undecaprenyl-pyrophosphoryl-MurNAc-pentapeptide, known as lipid I. This chain is Phospho-N-acetylmuramoyl-pentapeptide-transferase, found in Pseudomonas entomophila (strain L48).